The sequence spans 138 residues: Small ribosomal subunit protein uS11c (138 aa).

The interval 1-24 is disordered; the sequence is MAKSPPRSGSRRPGRIGSRKSGRR. The span at 9–24 shows a compositional bias: basic residues; it reads GSRRPGRIGSRKSGRR.

It belongs to the universal ribosomal protein uS11 family. As to quaternary structure, part of the 30S ribosomal subunit.

The protein resides in the plastid. It localises to the chloroplast. In Citrus sinensis (Sweet orange), this protein is Small ribosomal subunit protein uS11c.